The following is a 142-amino-acid chain: MGKTRGMGAARKLKNHRRRQRWADKSYKKSHLGNEWKKPFAGSSHAKGIVLEKIGIEAKQPNSAIRKCARVQLIKNGKKIAAFVPNDGCLNYIEENDEVLIAGFGRKGHAVGDIPGVRFKVVKVSGVSLLALFKEKKEKPRS.

The segment at 1-30 is disordered; sequence MGKTRGMGAARKLKNHRRRQRWADKSYKKS. Basic residues predominate over residues 11–20; it reads RKLKNHRRRQ. The segment covering 21–30 has biased composition (basic and acidic residues); that stretch reads RWADKSYKKS. P61 is modified (hydroxyproline).

The protein belongs to the universal ribosomal protein uS12 family.

The protein is Small ribosomal subunit protein uS12 (RPS23) of Fragaria ananassa (Strawberry).